A 248-amino-acid polypeptide reads, in one-letter code: Secreted and transmembrane protein 1 (248 aa).

The signal sequence occupies residues 1–28 (MQTCPLAFPGHVSQALGTLLFLAASLSA). At 29-145 (QNEGWDSPIC…AEPQSAPDTG (117 aa)) the chain is on the extracellular side. Residues cysteine 38 and cysteine 55 are joined by a disulfide bond. Residue asparagine 56 is glycosylated (N-linked (GlcNAc...) asparagine). A helical membrane pass occupies residues 146-166 (FWPVPAVVTAVFILLVALVMF). Over 167 to 248 (AWYRCRCSQQ…QPLFPYAADP (82 aa)) the chain is Cytoplasmic.

It belongs to the SECTM family. As to quaternary structure, interacts with CD7. Detected at the highest levels in peripheral blood leukocytes and breast cancer cell lines. Found in leukocytes of the myeloid lineage, with the strongest expression observed in granulocytes and no detectable expression in lymphocytes. Expressed in thymic epithelial cells and fibroblasts.

It is found in the cell membrane. The protein localises to the secreted. Its function is as follows. May be involved in thymocyte signaling. This chain is Secreted and transmembrane protein 1 (SECTM1), found in Homo sapiens (Human).